The sequence spans 339 residues: Putative methylthioribose-1-phosphate isomerase (339 aa).

Substrate is bound by residues 43 to 45 (RGA), R86, and Q191. Residue D232 is the Proton donor of the active site. Substrate is bound at residue 241–242 (NK).

Belongs to the eIF-2B alpha/beta/delta subunits family. MtnA subfamily.

The enzyme catalyses 5-(methylsulfanyl)-alpha-D-ribose 1-phosphate = 5-(methylsulfanyl)-D-ribulose 1-phosphate. In terms of biological role, catalyzes the interconversion of methylthioribose-1-phosphate (MTR-1-P) into methylthioribulose-1-phosphate (MTRu-1-P). The sequence is that of Putative methylthioribose-1-phosphate isomerase from Archaeoglobus fulgidus (strain ATCC 49558 / DSM 4304 / JCM 9628 / NBRC 100126 / VC-16).